A 146-amino-acid chain; its full sequence is Large ribosomal subunit protein uL16 (146 aa).

This sequence belongs to the universal ribosomal protein uL16 family. Part of the 50S ribosomal subunit.

Binds 23S rRNA and is also seen to make contacts with the A and possibly P site tRNAs. The sequence is that of Large ribosomal subunit protein uL16 from Lactobacillus acidophilus (strain ATCC 700396 / NCK56 / N2 / NCFM).